The primary structure comprises 385 residues: NifS/IcsS protein homolog (385 aa).

Residues 69–70, N149, Q178, and 199–201 contribute to the pyridoxal 5'-phosphate site; these read GT and SSH. K202 bears the N6-(pyridoxal phosphate)lysine mark. T237 contributes to the pyridoxal 5'-phosphate binding site. C325 serves as the catalytic Cysteine persulfide intermediate. A [2Fe-2S] cluster-binding site is contributed by C325.

Belongs to the class-V pyridoxal-phosphate-dependent aminotransferase family. NifS/IscS subfamily. It depends on pyridoxal 5'-phosphate as a cofactor.

This chain is NifS/IcsS protein homolog, found in Lactobacillus delbrueckii subsp. bulgaricus (strain ATCC 11842 / DSM 20081 / BCRC 10696 / JCM 1002 / NBRC 13953 / NCIMB 11778 / NCTC 12712 / WDCM 00102 / Lb 14).